Consider the following 575-residue polypeptide: MKKIKLEKPTSGSQLVLQTLKELGVEIIFGYPGGAMLPLYDAIHNFEGIQHILARHEQGATHEAEGYAKSSGKVGVVVVTSGPGATNAVTGIADAYLDSVPLLVFTGQVGPLSIGKDAFQEADTVGITAPITKYNYQIRETADIPRIVTEAYYLARTGRPGPVEIDLPKDVSTLEVTEINDPSLNLPHYHESEKATDEQLQELLTELSVSKKPVIIAGGGINYSGSVDIFRAFVEKYQIPVVSTLLGLGTLPISHELQLGMAGMHGSYAANMALVEADYIINLGSRFDDRVVSNPAKVAKNAVVAHIDIDAAELGKIVKTDIPILSDLKAALSRLLQLNKVRTDFNDWIKTVTKNKEKAPFTYEPQNHDIRPQETIKLIGEYTQGDAIIVTDVGQHQMWVAQYYPYKNARQLITSGGMGTMGFGIPAAIGAKLAQPNKNVIVFVGDGGFQMTNQELALLNGYGIAIKVVLINNHSLGMVRQWQESFYEERRSQSVFDVEPNFQLLAEAYGIKHVKLDNPKTLADDLKIITEDEPMLIEVLISKSEHVLPMIPAGLHSDEMIGLHFTDENEEVDNA.

A thiamine diphosphate-binding site is contributed by Glu57. FAD contacts are provided by residues Arg159, 265–286 (HGSY…LGSR), and 308–327 (DIDA…ILSD). The tract at residues 395–475 (QHQMWVAQYY…IKVVLINNHS (81 aa)) is thiamine pyrophosphate binding. Mg(2+) contacts are provided by Asp446 and Asn473.

Belongs to the TPP enzyme family. Dimer of large and small chains. Requires Mg(2+) as cofactor. It depends on thiamine diphosphate as a cofactor.

The enzyme catalyses 2 pyruvate + H(+) = (2S)-2-acetolactate + CO2. Its pathway is amino-acid biosynthesis; L-isoleucine biosynthesis; L-isoleucine from 2-oxobutanoate: step 1/4. The protein operates within amino-acid biosynthesis; L-valine biosynthesis; L-valine from pyruvate: step 1/4. The protein is Acetolactate synthase large subunit (ilvB) of Lactococcus lactis subsp. lactis (strain IL1403) (Streptococcus lactis).